A 237-amino-acid chain; its full sequence is Orotidine 5'-phosphate decarboxylase (237 aa).

Substrate contacts are provided by residues aspartate 17, lysine 39, 66-75 (DLKLHDIGNT), threonine 121, arginine 182, glutamine 191, glycine 211, and arginine 212. Lysine 68 acts as the Proton donor in catalysis.

The protein belongs to the OMP decarboxylase family. Type 1 subfamily. As to quaternary structure, homodimer.

The enzyme catalyses orotidine 5'-phosphate + H(+) = UMP + CO2. It functions in the pathway pyrimidine metabolism; UMP biosynthesis via de novo pathway; UMP from orotate: step 2/2. In terms of biological role, catalyzes the decarboxylation of orotidine 5'-monophosphate (OMP) to uridine 5'-monophosphate (UMP). The protein is Orotidine 5'-phosphate decarboxylase of Bradyrhizobium diazoefficiens (strain JCM 10833 / BCRC 13528 / IAM 13628 / NBRC 14792 / USDA 110).